The primary structure comprises 211 residues: Thiamine-phosphate synthase (211 aa).

4-amino-2-methyl-5-(diphosphooxymethyl)pyrimidine is bound by residues 44–48 and N75; that span reads QYRNK. Positions 76 and 95 each coordinate Mg(2+). S114 contacts 4-amino-2-methyl-5-(diphosphooxymethyl)pyrimidine. Residue 140 to 142 participates in 2-[(2R,5Z)-2-carboxy-4-methylthiazol-5(2H)-ylidene]ethyl phosphate binding; it reads TKS. K143 contributes to the 4-amino-2-methyl-5-(diphosphooxymethyl)pyrimidine binding site. G171 provides a ligand contact to 2-[(2R,5Z)-2-carboxy-4-methylthiazol-5(2H)-ylidene]ethyl phosphate.

Belongs to the thiamine-phosphate synthase family. Mg(2+) is required as a cofactor.

The catalysed reaction is 2-[(2R,5Z)-2-carboxy-4-methylthiazol-5(2H)-ylidene]ethyl phosphate + 4-amino-2-methyl-5-(diphosphooxymethyl)pyrimidine + 2 H(+) = thiamine phosphate + CO2 + diphosphate. It catalyses the reaction 2-(2-carboxy-4-methylthiazol-5-yl)ethyl phosphate + 4-amino-2-methyl-5-(diphosphooxymethyl)pyrimidine + 2 H(+) = thiamine phosphate + CO2 + diphosphate. The enzyme catalyses 4-methyl-5-(2-phosphooxyethyl)-thiazole + 4-amino-2-methyl-5-(diphosphooxymethyl)pyrimidine + H(+) = thiamine phosphate + diphosphate. Its pathway is cofactor biosynthesis; thiamine diphosphate biosynthesis; thiamine phosphate from 4-amino-2-methyl-5-diphosphomethylpyrimidine and 4-methyl-5-(2-phosphoethyl)-thiazole: step 1/1. In terms of biological role, condenses 4-methyl-5-(beta-hydroxyethyl)thiazole monophosphate (THZ-P) and 2-methyl-4-amino-5-hydroxymethyl pyrimidine pyrophosphate (HMP-PP) to form thiamine monophosphate (TMP). This chain is Thiamine-phosphate synthase, found in Koribacter versatilis (strain Ellin345).